The primary structure comprises 211 residues: Thymidylate kinase (211 aa).

Residue 10–17 (GGDGVGKS) coordinates ATP.

Belongs to the thymidylate kinase family.

It catalyses the reaction dTMP + ATP = dTDP + ADP. In terms of biological role, phosphorylation of dTMP to form dTDP in both de novo and salvage pathways of dTTP synthesis. This Clavibacter sepedonicus (Clavibacter michiganensis subsp. sepedonicus) protein is Thymidylate kinase.